The primary structure comprises 224 residues: BOS complex subunit TMEM147 (224 aa).

Residues 1–21 (MTLFHFGNCFALAYFPYFITY) traverse the membrane as a helical segment. Residues 22-34 (KCSGLSEYNAFWK) are Cytoplasmic-facing. Residues 35–58 (CVQAGVTYLFVQLCKMLFLATFFP) traverse the membrane as a helical segment. Over 59 to 66 (TWEGGIYD) the chain is Lumenal. Residues 67–88 (FIGEFMKASVDVADLIGLNLVM) form a helical membrane-spanning segment. The Cytoplasmic segment spans residues 89–98 (SRNAGKGEYK). Residues 99 to 124 (IMVAALGWATAELIMSRCIPLWVGAR) traverse the membrane as a helical segment. At 125-129 (GIEFD) the chain is on the lumenal side. The helical transmembrane segment at 130 to 155 (WKYIQMSIDSNISLVHYIVASAQVWM) threads the bilayer. Topologically, residues 156–164 (ITRYDLYHT) are cytoplasmic. The helical transmembrane segment at 165–187 (FRPAVLLLMFLSVYKAFVMETFV) threads the bilayer. Over 188–194 (HLCSLGS) the chain is Lumenal. A helical membrane pass occupies residues 195–216 (WAALLARAVVTGLLALSTLALY). Over 217 to 224 (VAVVNVHS) the chain is Cytoplasmic.

This sequence belongs to the TMEM147 family. As to quaternary structure, component of the back of Sec61 (BOS) complex, composed of NCLN/Nicalin, NOMO (NOMO1, NOMO2 or NOMO3) and TMEM147. The BOS complex is part of the multi-pass translocon (MPT) complex, composed of three subcomplexes, the GEL complex (composed of RAB5IF/OPTI and TMCO1), the BOS complex (composed of NCLN/Nicalin, NOMO and TMEM147) and the PAT complex (composed of WDR83OS/Asterix and CCDC47). The MPT complex associates with the SEC61 complex. Interacts with CHRM3, CHRM1 and AVPR2. Interacts with LBR; promoting LBR localization to the nucleus inner membrane. Interacts with DHCR7.

It localises to the endoplasmic reticulum membrane. The protein resides in the nucleus membrane. It is found in the cell membrane. In terms of biological role, component of the multi-pass translocon (MPT) complex that mediates insertion of multi-pass membrane proteins into the lipid bilayer of membranes. The MPT complex takes over after the SEC61 complex: following membrane insertion of the first few transmembrane segments of proteins by the SEC61 complex, the MPT complex occludes the lateral gate of the SEC61 complex to promote insertion of subsequent transmembrane regions. Also acts as a negative regulator of CHRM3 function, most likely by interfering with its trafficking to the cell membrane. Negatively regulates CHRM3-mediated calcium mobilization and activation of RPS6KA1/p90RSK activity. Regulates LBR localization to the nucleus inner membrane. In Homo sapiens (Human), this protein is BOS complex subunit TMEM147.